Reading from the N-terminus, the 250-residue chain is 3-deoxy-manno-octulosonate cytidylyltransferase (250 aa).

Belongs to the KdsB family.

The protein resides in the cytoplasm. The catalysed reaction is 3-deoxy-alpha-D-manno-oct-2-ulosonate + CTP = CMP-3-deoxy-beta-D-manno-octulosonate + diphosphate. It participates in nucleotide-sugar biosynthesis; CMP-3-deoxy-D-manno-octulosonate biosynthesis; CMP-3-deoxy-D-manno-octulosonate from 3-deoxy-D-manno-octulosonate and CTP: step 1/1. The protein operates within bacterial outer membrane biogenesis; lipopolysaccharide biosynthesis. In terms of biological role, activates KDO (a required 8-carbon sugar) for incorporation into bacterial lipopolysaccharide in Gram-negative bacteria. The protein is 3-deoxy-manno-octulosonate cytidylyltransferase of Sinorhizobium medicae (strain WSM419) (Ensifer medicae).